We begin with the raw amino-acid sequence, 131 residues long: MGELFLLRNIKVAGSMSEQERDEVLEDDDDDEDNKSSQQERDEFVEDDDNNSIQSSPSCAQPLLTQYHDDGSTPLLIPERLQFPTSQNLTPRLIPERLQYPTSQNLTSIKRKTTRLRFGFGEISRVKKTIN.

A disordered region spans residues 16–71 (MSEQERDEVLEDDDDDEDNKSSQQERDEFVEDDDNNSIQSSPSCAQPLLTQYHDDG). A compositionally biased stretch (acidic residues) spans 20–33 (ERDEVLEDDDDDED).

This is an uncharacterized protein from Dictyostelium discoideum (Social amoeba).